We begin with the raw amino-acid sequence, 654 residues long: Marinolic acid--CoA ligase (654 aa).

The protein belongs to the ATP-dependent AMP-binding enzyme family.

The enzyme catalyses ATP + a marinolic acid + CoA = AMP + diphosphate + a marinoloyl-CoA.. The catalysed reaction is ATP + a pseudomonic acid + CoA = AMP + diphosphate + a pseudomonoyl-CoA.. It catalyses the reaction marinolate C + ATP + CoA = marinoloyl-CoA C + AMP + diphosphate. It carries out the reaction pseudomonate C + ATP + CoA = pseudomonoyl-CoA C + AMP + diphosphate. It participates in antibiotic biosynthesis. Its function is as follows. Acyl-CoA ligase that catalyzes the CoA acylation of pseudomonate C, leading to the formation of pseudomonoyl-CoA C (PAC-CoA). Also shows high activity with pseudomonoyl-CoA A as substrate. In addition, can activate acetic, octanoic, 2,4-dodecadienoic and 2,4-decadienoic acids, although with much lower activity. In vivo, is probably involved in the biosynthesis of thiomarinol, a naturally occurring double-headed antibiotic. The chain is Marinolic acid--CoA ligase from Pseudoalteromonas sp. (strain SANK 73390).